Consider the following 373-residue polypeptide: UDP-sugar transporter UST74c (373 aa).

The interval 27–49 (LEEKMGGSADRSSLLDGSGSKEL) is disordered. Ser-50 is subject to Phosphoserine. 8 consecutive transmembrane segments (helical) span residues 89–111 (HFPS…LGMG), 131–153 (FPLP…TLSL), 174–196 (ILGL…GALL), 206–225 (MRGY…NGVY), 238–260 (YGLM…YVTG), 275–297 (VFVV…TILC), 302–324 (SALT…GMFI), and 329–351 (VFSW…YTYV).

Belongs to the TPT transporter family. SLC35D subfamily.

It is found in the golgi apparatus membrane. In terms of biological role, involved in the import of UDP-sugars from the cytoplasm into the Golgi lumen. This Drosophila melanogaster (Fruit fly) protein is UDP-sugar transporter UST74c (frc).